Consider the following 284-residue polypeptide: MTAQIIDGKAIAQSIRTTLKQKVTQRRQAGFRAPGLAVILVGSDAASQVYVGSKRKACEEVGFESQSFDLDTETTEAELLALIDECNANPSIDGILVQLPLPAHIDDSKVIERIRPDKDVDGFHPYNVGRLAQRIPVLRSCTPMGIMTLIKSTGIDTYGLDATVVGASNIVGRPMTLELLLAGCTTTTCHRFTKNLEQKVRQADLLVVAVGKPGFIPGDWIKPGAIVIDVGINRLENGSLVGDVEFNVAAEKAAFITPVPGGVGPMTIASLLENTLYACEQYHS.

Residues 166-168 and isoleucine 232 contribute to the NADP(+) site; that span reads GAS.

This sequence belongs to the tetrahydrofolate dehydrogenase/cyclohydrolase family. In terms of assembly, homodimer.

The enzyme catalyses (6R)-5,10-methylene-5,6,7,8-tetrahydrofolate + NADP(+) = (6R)-5,10-methenyltetrahydrofolate + NADPH. It carries out the reaction (6R)-5,10-methenyltetrahydrofolate + H2O = (6R)-10-formyltetrahydrofolate + H(+). The protein operates within one-carbon metabolism; tetrahydrofolate interconversion. In terms of biological role, catalyzes the oxidation of 5,10-methylenetetrahydrofolate to 5,10-methenyltetrahydrofolate and then the hydrolysis of 5,10-methenyltetrahydrofolate to 10-formyltetrahydrofolate. The protein is Bifunctional protein FolD of Shewanella frigidimarina (strain NCIMB 400).